The following is a 532-amino-acid chain: Purple acid phosphatase 15 (532 aa).

Residues 1–19 form the signal peptide; it reads MTFLLLLLFCFLSPAISSA. Asparagine 136 is a glycosylation site (N-linked (GlcNAc...) asparagine). Aspartate 194 is a binding site for Fe cation. Residue asparagine 200 is glycosylated (N-linked (GlcNAc...) asparagine). 2 residues coordinate Fe cation: aspartate 221 and tyrosine 224. Zn(2+) is bound at residue aspartate 221. N-linked (GlcNAc...) asparagine glycans are attached at residues asparagine 231 and asparagine 264. Asparagine 277 provides a ligand contact to Zn(2+). Residue asparagine 277 coordinates substrate. 2 N-linked (GlcNAc...) asparagine glycosylation sites follow: asparagine 286 and asparagine 301. Histidine 359 lines the Zn(2+) pocket. The active-site Proton donor is the histidine 369. Histidine 396 contributes to the Zn(2+) binding site. Residue 396 to 398 coordinates substrate; it reads HVH. Histidine 398 contributes to the Fe cation binding site. N-linked (GlcNAc...) asparagine glycosylation occurs at asparagine 491.

This sequence belongs to the metallophosphoesterase superfamily. Purple acid phosphatase family. Homodimer. Requires Fe cation as cofactor. Zn(2+) serves as cofactor. Expressed in roots, stems, cotyledons, leaves, flowers and siliques.

The protein resides in the secreted. It carries out the reaction 1D-myo-inositol hexakisphosphate + H2O = 1D-myo-inositol 1,2,3,5,6-pentakisphosphate + phosphate. It catalyses the reaction a phosphate monoester + H2O = an alcohol + phosphate. Functionally, acid phosphatase activity with p-nitrophenyl phosphate (pNPP), D-myoinositol 1-phosphate (Ins(1)P1), phytic acid and Myo-inositol hexakisphosphate. Low or no activity with Glc-6-P and ATP. Confers shoot growth stimulation, enhanced salt and osmotic stress tolerance, and ABA insensitivity. May modulate ascorbic acid (AsA) levels by controlling the input of myoinositol into this branch of AsA biosynthesis. This chain is Purple acid phosphatase 15 (PAP15), found in Arabidopsis thaliana (Mouse-ear cress).